We begin with the raw amino-acid sequence, 1499 residues long: Rho GTPase-activating protein 35 (1499 aa).

The tract at residues 1–266 (MMMARKQDVR…IPYFEALKQQ (266 aa)) is has GTPase activity, required for proper localization. Residues Lys28, 33-37 (IGKSC), Leu52, Ser56, 95-97 (EQT), 201-203 (KCD), and 229-231 (SAR) contribute to the GTP site. FF domains are found at residues 270 to 327 (IATA…HIHR), 368 to 422 (KLLE…HLEK), 429 to 483 (RAEM…HQKQ), and 485 to 550 (IDRA…HIHF). Phosphotyrosine is present on Tyr308. Phosphoserine is present on Ser589. The pG1 pseudoGTPase domain maps to 592-767 (DPNIDRINLV…LLDSKRNLNL (176 aa)). Phosphoserine occurs at positions 770 and 773. Positions 783–947 (RIVMCLMCGD…FKDVVEKKNI (165 aa)) constitute a pG2 pseudoGTPase domain. 4 positions are modified to phosphoserine: Ser970, Ser975, Ser985, and Ser1072. Tyr1087 is modified (phosphotyrosine). Tyr1105 is modified (phosphotyrosine; by ABL2 and PTK6). A compositionally biased stretch (polar residues) spans 1124–1141 (KAQSNGSGNGSDSEMDTS). Positions 1124–1148 (KAQSNGSGNGSDSEMDTSSLERGRK) are disordered. 6 positions are modified to phosphoserine: Ser1134, Ser1142, Ser1150, Ser1176, Ser1179, and Ser1221. The segment at 1177-1207 (VGSDDELGPIRKKEEDQASQGYKGDNAVIPY) is disordered. A required for phospholipid binding and regulation of the substrate preference region spans residues 1213–1236 (PRRRNILRSLRRNTKKPKPKPRPS). Thr1226 carries the post-translational modification Phosphothreonine. Position 1236 is a phosphoserine (Ser1236). One can recognise a Rho-GAP domain in the interval 1249–1436 (VPLTTVVTPE…LFIQQCPFFF (188 aa)). The interval 1446–1499 (GAAPGSPSAMAPTVPFLTSTPATSQPSPPQSPPPTPQSPMQPLLSSQLQAEHTL) is disordered. The span at 1448–1470 (APGSPSAMAPTVPFLTSTPATSQ) shows a compositional bias: low complexity. Positions 1471–1484 (PSPPQSPPPTPQSP) are enriched in pro residues. Ser1472 and Ser1476 each carry phosphoserine. Thr1480 bears the Phosphothreonine mark. At Ser1483 the chain carries Phosphoserine. Low complexity predominate over residues 1485 to 1499 (MQPLLSSQLQAEHTL).

In terms of assembly, interacts with RASA1. Interacts with the general transcription factor GTF2I, the interaction sequesters GTF2I in the cytoplasm. Phosphorylation of Tyr-1105 by PTK6 promotes the association with RASA1, inactivating RHOA while activating RAS. Phosphorylation at Tyr-308 by PDGFRA inhibits binding to GTF2I. Phosphorylated by PRKCA at Ser-1221 and Thr-1226, induces relocalization from the cytoplasm to regions of plasma membrane ruffling and prevents the binding and substrate specificity regulation by phospholipids. In brain, phosphorylated by FYN and SRC. During focal adhesion formation, phosphorylated by MAPK1 and MAPK3 at the C-terminal region, probably at Ser-1451, Ser-1476, Thr-1480 and Ser-1483. Phosphorylation by MAPK1 and MAPK3 inhibits GAP function and localizes ARGHAP35 away from newly forming focal adhesions and stress fibers in cells spreading on fibronectin. Phosphorylation at Ser-1476 and Thr-1480 by GSK3B requires priming by MAPK and inhibits RhoGAP activity and modulates polarized cell migration. In terms of tissue distribution, ubiquitously expressed.

The protein resides in the cytoplasm. It is found in the cytoskeleton. Its subcellular location is the cilium basal body. It localises to the nucleus. The protein localises to the cell membrane. In terms of biological role, rho GTPase-activating protein (GAP). Binds several acidic phospholipids which inhibits the Rho GAP activity to promote the Rac GAP activity. This binding is inhibited by phosphorylation by PRKCA. Involved in cell differentiation as well as cell adhesion and migration, plays an important role in retinal tissue morphogenesis, neural tube fusion, midline fusion of the cerebral hemispheres and mammary gland branching morphogenesis. Transduces signals from p21-ras to the nucleus, acting via the ras GTPase-activating protein (GAP). Transduces SRC-dependent signals from cell-surface adhesion molecules, such as laminin, to promote neurite outgrowth. Regulates axon outgrowth, guidance and fasciculation. Modulates Rho GTPase-dependent F-actin polymerization, organization and assembly, is involved in polarized cell migration and in the positive regulation of ciliogenesis and cilia elongation. During mammary gland development, is required in both the epithelial and stromal compartments for ductal outgrowth. Represses transcription of the glucocorticoid receptor by binding to the cis-acting regulatory sequence 5'-GAGAAAAGAAACTGGAGAAACTC-3'; this function is however unclear and would need additional experimental evidences. The chain is Rho GTPase-activating protein 35 from Rattus norvegicus (Rat).